The sequence spans 121 residues: Small ribosomal subunit protein uS13 (121 aa).

Residues 91–121 are disordered; that stretch reads HRKGLPLRGQRTRTNARTRKGPRKAGVALKK.

Belongs to the universal ribosomal protein uS13 family. Part of the 30S ribosomal subunit. Forms a loose heterodimer with protein S19. Forms two bridges to the 50S subunit in the 70S ribosome.

Its function is as follows. Located at the top of the head of the 30S subunit, it contacts several helices of the 16S rRNA. In the 70S ribosome it contacts the 23S rRNA (bridge B1a) and protein L5 of the 50S subunit (bridge B1b), connecting the 2 subunits; these bridges are implicated in subunit movement. Contacts the tRNAs in the A and P-sites. The chain is Small ribosomal subunit protein uS13 from Cupriavidus pinatubonensis (strain JMP 134 / LMG 1197) (Cupriavidus necator (strain JMP 134)).